A 274-amino-acid polypeptide reads, in one-letter code: uncharacterized protein (274 aa).

Residues 1 to 30 (MTIDTPAREDQTLAATHRAMWALGDYALMA) form the signal peptide.

It to M.tuberculosis Rv1403c.

This is an uncharacterized protein from Mycobacterium bovis (strain ATCC BAA-935 / AF2122/97).